The chain runs to 232 residues: MTNADPHELQKFSDLAHRWWDPNAEFKPLHDLNPVRLGWIDAHAHLAGKRALDIGCGGGILSESMAGLGAQVKGIDLSTEALGVADLHSLESGISVDYEAIAAEAIAAREPGTYDVVTCMEMLEHVPSPGDVVAACATLVKPGGWVFFSTLNRNLKSYLFAVIGAEYIAQMLPKGTHDYARFIRPSELAGFVRATDLHIVEIKGITYHPIGKRFALSNDTDINYLVACRRGA.

S-adenosyl-L-methionine-binding residues include Arg36, Gly55, Asp76, and Met120.

The protein belongs to the methyltransferase superfamily. UbiG/COQ3 family.

It catalyses the reaction a 3-demethylubiquinol + S-adenosyl-L-methionine = a ubiquinol + S-adenosyl-L-homocysteine + H(+). The catalysed reaction is a 3-(all-trans-polyprenyl)benzene-1,2-diol + S-adenosyl-L-methionine = a 2-methoxy-6-(all-trans-polyprenyl)phenol + S-adenosyl-L-homocysteine + H(+). It participates in cofactor biosynthesis; ubiquinone biosynthesis. O-methyltransferase that catalyzes the 2 O-methylation steps in the ubiquinone biosynthetic pathway. In Burkholderia cenocepacia (strain ATCC BAA-245 / DSM 16553 / LMG 16656 / NCTC 13227 / J2315 / CF5610) (Burkholderia cepacia (strain J2315)), this protein is Ubiquinone biosynthesis O-methyltransferase.